The chain runs to 350 residues: RING finger protein 44 (350 aa).

The RING-type; atypical zinc-finger motif lies at 298–339 (CVVCFSDFEVRQLLRVLPCNHEFHAKCVDKWLKANRTCPICR).

In Rattus norvegicus (Rat), this protein is RING finger protein 44 (Rnf44).